The sequence spans 502 residues: Probable cytochrome P450 313b1 (502 aa).

Cys449 is a binding site for heme.

It belongs to the cytochrome P450 family. Requires heme as cofactor.

The protein localises to the endoplasmic reticulum membrane. The protein resides in the microsome membrane. In terms of biological role, may be involved in the metabolism of insect hormones and in the breakdown of synthetic insecticides. The chain is Probable cytochrome P450 313b1 (Cyp313b1) from Drosophila melanogaster (Fruit fly).